The following is a 444-amino-acid chain: Tol-Pal system protein TolB (444 aa).

Positions 1 to 19 are cleaved as a signal peptide; sequence MRNIIYFILSLLFSFKGYA.

This sequence belongs to the TolB family. In terms of assembly, the Tol-Pal system is composed of five core proteins: the inner membrane proteins TolA, TolQ and TolR, the periplasmic protein TolB and the outer membrane protein Pal. They form a network linking the inner and outer membranes and the peptidoglycan layer.

It localises to the periplasm. Functionally, part of the Tol-Pal system, which plays a role in outer membrane invagination during cell division and is important for maintaining outer membrane integrity. This is Tol-Pal system protein TolB from Rickettsia felis (strain ATCC VR-1525 / URRWXCal2) (Rickettsia azadi).